The following is a 252-amino-acid chain: Triosephosphate isomerase (252 aa).

9–11 serves as a coordination point for substrate; it reads NWK. Residue His100 is the Electrophile of the active site. Glu171 serves as the catalytic Proton acceptor. Residues Gly177, Ser216, and 237–238 contribute to the substrate site; that span reads GG.

The protein belongs to the triosephosphate isomerase family. As to quaternary structure, homodimer.

The protein resides in the cytoplasm. It carries out the reaction D-glyceraldehyde 3-phosphate = dihydroxyacetone phosphate. It functions in the pathway carbohydrate biosynthesis; gluconeogenesis. The protein operates within carbohydrate degradation; glycolysis; D-glyceraldehyde 3-phosphate from glycerone phosphate: step 1/1. Its function is as follows. Involved in the gluconeogenesis. Catalyzes stereospecifically the conversion of dihydroxyacetone phosphate (DHAP) to D-glyceraldehyde-3-phosphate (G3P). This chain is Triosephosphate isomerase, found in Polynucleobacter asymbioticus (strain DSM 18221 / CIP 109841 / QLW-P1DMWA-1) (Polynucleobacter necessarius subsp. asymbioticus).